Here is a 619-residue protein sequence, read N- to C-terminus: Dihydroxy-acid dehydratase (619 aa).

D81 contacts Mg(2+). C122 contacts [2Fe-2S] cluster. Positions 123 and 124 each coordinate Mg(2+). The residue at position 124 (K124) is an N6-carboxylysine. Position 201 (C201) interacts with [2Fe-2S] cluster. E496 contacts Mg(2+). Residue S522 is the Proton acceptor of the active site.

The protein belongs to the IlvD/Edd family. As to quaternary structure, homodimer. The cofactor is [2Fe-2S] cluster. Requires Mg(2+) as cofactor.

It catalyses the reaction (2R)-2,3-dihydroxy-3-methylbutanoate = 3-methyl-2-oxobutanoate + H2O. The catalysed reaction is (2R,3R)-2,3-dihydroxy-3-methylpentanoate = (S)-3-methyl-2-oxopentanoate + H2O. It participates in amino-acid biosynthesis; L-isoleucine biosynthesis; L-isoleucine from 2-oxobutanoate: step 3/4. It functions in the pathway amino-acid biosynthesis; L-valine biosynthesis; L-valine from pyruvate: step 3/4. Its function is as follows. Functions in the biosynthesis of branched-chain amino acids. Catalyzes the dehydration of (2R,3R)-2,3-dihydroxy-3-methylpentanoate (2,3-dihydroxy-3-methylvalerate) into 2-oxo-3-methylpentanoate (2-oxo-3-methylvalerate) and of (2R)-2,3-dihydroxy-3-methylbutanoate (2,3-dihydroxyisovalerate) into 2-oxo-3-methylbutanoate (2-oxoisovalerate), the penultimate precursor to L-isoleucine and L-valine, respectively. This Paracidovorax citrulli (strain AAC00-1) (Acidovorax citrulli) protein is Dihydroxy-acid dehydratase.